A 221-amino-acid chain; its full sequence is N-(5'-phosphoribosyl)anthranilate isomerase (221 aa).

It belongs to the TrpF family.

It carries out the reaction N-(5-phospho-beta-D-ribosyl)anthranilate = 1-(2-carboxyphenylamino)-1-deoxy-D-ribulose 5-phosphate. It functions in the pathway amino-acid biosynthesis; L-tryptophan biosynthesis; L-tryptophan from chorismate: step 3/5. In Parabacteroides distasonis (strain ATCC 8503 / DSM 20701 / CIP 104284 / JCM 5825 / NCTC 11152), this protein is N-(5'-phosphoribosyl)anthranilate isomerase.